Consider the following 208-residue polypeptide: Probable nicotinate-nucleotide adenylyltransferase (208 aa).

This sequence belongs to the NadD family.

It carries out the reaction nicotinate beta-D-ribonucleotide + ATP + H(+) = deamido-NAD(+) + diphosphate. The protein operates within cofactor biosynthesis; NAD(+) biosynthesis; deamido-NAD(+) from nicotinate D-ribonucleotide: step 1/1. Its function is as follows. Catalyzes the reversible adenylation of nicotinate mononucleotide (NaMN) to nicotinic acid adenine dinucleotide (NaAD). This Symbiobacterium thermophilum (strain DSM 24528 / JCM 14929 / IAM 14863 / T) protein is Probable nicotinate-nucleotide adenylyltransferase.